Reading from the N-terminus, the 1104-residue chain is Transposon Ty4-P Gag-Pol polyprotein (1104 aa).

Residues 48–112 (VKQYQRNLNR…VEKIQLLETN (65 aa)) are a coiled coil. A ty4 protease region spans residues 381–501 (QQQLKSSAKE…KTKMVLSRKY (121 aa)). The active-site For protease activity; shared with dimeric partner is Asp-414. An integrase-type zinc finger-like region spans residues 539 to 599 (AIKPTSSPGF…EPNEFWCQTC (61 aa)). One can recognise an Integrase catalytic domain in the interval 619 to 786 (TDHEPGSSWC…LPLKAISRQP (168 aa)). Asp-630 and Asp-695 together coordinate Mg(2+).

The protease is a homodimer, whose active site consists of two apposed aspartic acid residues. Post-translationally, proteolytically processed into capsid protein (CA), Ty4 protease (PR), integrase (IN) and reverse transcriptase/ribonuclease H (RT) proteins. Initially, virus-like particles (VLPs) are composed of the structural unprocessed proteins Gag and Gag-Pol, and also contain the host initiator methionine tRNA (tRNA(i)-Met) which serves as a primer for minus-strand DNA synthesis, and a dimer of genomic Ty RNA. Processing of the polyproteins occurs within the particle and proceeds by an ordered pathway, called maturation. First, the protease (PR) is released by autocatalytic cleavage of the Gag-Pol polyprotein, and this cleavage is a prerequisite for subsequent processing at the remaining sites to release the mature structural and catalytic proteins. Maturation takes place prior to the RT reaction and is required to produce transposition-competent VLPs.

It is found in the cytoplasm. The protein resides in the nucleus. The catalysed reaction is DNA(n) + a 2'-deoxyribonucleoside 5'-triphosphate = DNA(n+1) + diphosphate. The enzyme catalyses Endonucleolytic cleavage to 5'-phosphomonoester.. Capsid protein (CA) is the structural component of the virus-like particle (VLP), forming the shell that encapsulates the retrotransposons dimeric RNA genome. Functionally, the aspartyl protease (PR) mediates the proteolytic cleavages of the Gag and Gag-Pol polyproteins after assembly of the VLP. In terms of biological role, reverse transcriptase/ribonuclease H (RT) is a multifunctional enzyme that catalyzes the conversion of the retro-elements RNA genome into dsDNA within the VLP. The enzyme displays a DNA polymerase activity that can copy either DNA or RNA templates, and a ribonuclease H (RNase H) activity that cleaves the RNA strand of RNA-DNA heteroduplexes during plus-strand synthesis and hydrolyzes RNA primers. The conversion leads to a linear dsDNA copy of the retrotransposon that includes long terminal repeats (LTRs) at both ends. Its function is as follows. Integrase (IN) targets the VLP to the nucleus, where a subparticle preintegration complex (PIC) containing at least integrase and the newly synthesized dsDNA copy of the retrotransposon must transit the nuclear membrane. Once in the nucleus, integrase performs the integration of the dsDNA into the host genome. This chain is Transposon Ty4-P Gag-Pol polyprotein (TY4B-P), found in Saccharomyces cerevisiae (strain ATCC 204508 / S288c) (Baker's yeast).